Here is a 619-residue protein sequence, read N- to C-terminus: DNA mismatch repair protein MutL (619 aa).

The span at 364–375 shows a compositional bias: low complexity; the sequence is EPASAREPAAPR. Residues 364-399 form a disordered region; it reads EPASAREPAAPRYSTSSGATGGRQPAASWPHAQPGY.

Belongs to the DNA mismatch repair MutL/HexB family.

Functionally, this protein is involved in the repair of mismatches in DNA. It is required for dam-dependent methyl-directed DNA mismatch repair. May act as a 'molecular matchmaker', a protein that promotes the formation of a stable complex between two or more DNA-binding proteins in an ATP-dependent manner without itself being part of a final effector complex. In Citrobacter koseri (strain ATCC BAA-895 / CDC 4225-83 / SGSC4696), this protein is DNA mismatch repair protein MutL.